The following is a 506-amino-acid chain: Histidine ammonia-lyase (506 aa).

The 5-imidazolinone (Ala-Gly) cross-link spans 142–144; it reads ASG. Residue Ser143 is modified to 2,3-didehydroalanine (Ser).

Belongs to the PAL/histidase family. Post-translationally, contains an active site 4-methylidene-imidazol-5-one (MIO), which is formed autocatalytically by cyclization and dehydration of residues Ala-Ser-Gly.

The protein resides in the cytoplasm. The catalysed reaction is L-histidine = trans-urocanate + NH4(+). Its pathway is amino-acid degradation; L-histidine degradation into L-glutamate; N-formimidoyl-L-glutamate from L-histidine: step 1/3. This chain is Histidine ammonia-lyase, found in Bacillus cereus (strain B4264).